Consider the following 235-residue polypeptide: Ribitol-5-phosphate cytidylyltransferase (235 aa).

CTP-binding positions include 7–10 (LAGG), 82–88 (GADRNTS), and Ser113.

Belongs to the IspD/TarI cytidylyltransferase family. TarI subfamily.

It catalyses the reaction D-ribitol 5-phosphate + CTP + H(+) = CDP-L-ribitol + diphosphate. The protein operates within cell wall biogenesis; poly(ribitol phosphate) teichoic acid biosynthesis. Its function is as follows. Catalyzes the transfer of the cytidylyl group of CTP to D-ribitol 5-phosphate. The protein is Ribitol-5-phosphate cytidylyltransferase of Streptococcus pneumoniae (strain ATCC 700669 / Spain 23F-1).